The sequence spans 555 residues: Spermine oxidase (555 aa).

FAD-binding positions include A35, E55, R63, 79–80, and V261; that span reads TW. The disordered stretch occupies residues 271-306; that stretch reads ARPRGPEIEPRGEGDHNHDTGEGGQGGEEPRGGRWD. Residues 274–291 show a composition bias toward basic and acidic residues; the sequence is RGPEIEPRGEGDHNHDTG. Residues E519 and 528-529 contribute to the FAD site; that span reads TT.

It belongs to the flavin monoamine oxidase family. FAD is required as a cofactor. As to expression, widely expressed. Expressed in human tumor cell lines. Isoform 4 is only found in an embryonal kidney cell line.

The protein resides in the cytoplasm. It is found in the nucleus. It catalyses the reaction spermine + O2 + H2O = 3-aminopropanal + spermidine + H2O2. The protein operates within amine and polyamine degradation; spermine degradation. Inhibited at more than 90% by SL-11144, SL-11150 and SL-11158, at concentrations less than 1 uM. Its function is as follows. Flavoenzyme which catalyzes the oxidation of spermine to spermidine. Can also use N(1)-acetylspermine and spermidine as substrates, with different affinity depending on the isoform (isozyme) and on the experimental conditions. Plays an important role in the regulation of polyamine intracellular concentration and has the potential to act as a determinant of cellular sensitivity to the antitumor polyamine analogs. May contribute to beta-alanine production via aldehyde dehydrogenase conversion of 3-amino-propanal. The protein is Spermine oxidase (SMOX) of Homo sapiens (Human).